The following is a 427-amino-acid chain: Glutamate-1-semialdehyde 2,1-aminomutase (427 aa).

N6-(pyridoxal phosphate)lysine is present on K265.

It belongs to the class-III pyridoxal-phosphate-dependent aminotransferase family. HemL subfamily. Homodimer. Pyridoxal 5'-phosphate serves as cofactor.

The protein localises to the cytoplasm. The enzyme catalyses (S)-4-amino-5-oxopentanoate = 5-aminolevulinate. It functions in the pathway porphyrin-containing compound metabolism; protoporphyrin-IX biosynthesis; 5-aminolevulinate from L-glutamyl-tRNA(Glu): step 2/2. The sequence is that of Glutamate-1-semialdehyde 2,1-aminomutase from Pseudomonas syringae pv. syringae (strain B728a).